A 181-amino-acid chain; its full sequence is ATP-dependent protease subunit HslV (181 aa).

Residue threonine 2 is part of the active site. Residues glycine 157, cysteine 160, and threonine 163 each coordinate Na(+).

The protein belongs to the peptidase T1B family. HslV subfamily. As to quaternary structure, a double ring-shaped homohexamer of HslV is capped on each side by a ring-shaped HslU homohexamer. The assembly of the HslU/HslV complex is dependent on binding of ATP.

The protein resides in the cytoplasm. It carries out the reaction ATP-dependent cleavage of peptide bonds with broad specificity.. With respect to regulation, allosterically activated by HslU binding. In terms of biological role, protease subunit of a proteasome-like degradation complex believed to be a general protein degrading machinery. This chain is ATP-dependent protease subunit HslV, found in Hahella chejuensis (strain KCTC 2396).